The chain runs to 317 residues: Cytochrome c biogenesis protein CcsA (317 aa).

7 helical membrane-spanning segments follow: residues I13–V35, G44–G64, L71–F91, M143–I163, M171–L191, V225–N245, and A286–L306.

The protein belongs to the CcmF/CycK/Ccl1/NrfE/CcsA family. May interact with Ccs1.

It is found in the plastid. It localises to the chloroplast thylakoid membrane. Functionally, required during biogenesis of c-type cytochromes (cytochrome c6 and cytochrome f) at the step of heme attachment. This chain is Cytochrome c biogenesis protein CcsA, found in Illicium oligandrum (Star anise).